The chain runs to 274 residues: MAINPITRNKIKDYLNSFIQQQLSVYSQRSLREFQDVDSYPSSLSKDGDLKPFHASLIPASIMRLNRFERSLSTGLGSTFEECTRLIALDHHAVALRNYDIQAALDQAQWAAIDQLISTIDRGLKHQTPSLNQMLEQIQSIPLTGILETHIVRADLYIQRHDGSELFFEIKSPKPSKGQCLEVMQRLLRIYTIKQQSAVPVKAFYAMAYNPWGISRASYRSSITKKYTDFSNAVVIGQEFWSLIGEPSTYTELLEIYHEVGLAKSAEITQKLLQ.

It belongs to the TdeIII type II restriction endonuclease family.

It catalyses the reaction Endonucleolytic cleavage of DNA to give specific double-stranded fragments with terminal 5'-phosphates.. A P subtype restriction enzyme that recognizes the double-stranded sequence 5'-GGWCC-3' and cleaves after G-1. This system is less active than isoschizomeric RM.HgiEI. In Herpetosiphon aurantiacus (Herpetosiphon giganteus), this protein is Type II restriction enzyme HgiBI.